The following is a 357-amino-acid chain: Aspartate carbamoyltransferase catalytic subunit (357 aa).

The segment covering 1 to 17 (MSNSIDSQSIPTISPTD) has biased composition (polar residues). The interval 1–21 (MSNSIDSQSIPTISPTDYTKF) is disordered. Residues Arg-97 and Thr-98 each contribute to the carbamoyl phosphate site. Lys-125 serves as a coordination point for L-aspartate. Carbamoyl phosphate is bound by residues Arg-147, His-177, and Gln-180. L-aspartate-binding residues include Arg-211 and Arg-266. Gly-307 and Pro-308 together coordinate carbamoyl phosphate.

The protein belongs to the aspartate/ornithine carbamoyltransferase superfamily. ATCase family. In terms of assembly, heterododecamer (2C3:3R2) of six catalytic PyrB chains organized as two trimers (C3), and six regulatory PyrI chains organized as three dimers (R2).

The enzyme catalyses carbamoyl phosphate + L-aspartate = N-carbamoyl-L-aspartate + phosphate + H(+). It functions in the pathway pyrimidine metabolism; UMP biosynthesis via de novo pathway; (S)-dihydroorotate from bicarbonate: step 2/3. Functionally, catalyzes the condensation of carbamoyl phosphate and aspartate to form carbamoyl aspartate and inorganic phosphate, the committed step in the de novo pyrimidine nucleotide biosynthesis pathway. In Psychrobacter arcticus (strain DSM 17307 / VKM B-2377 / 273-4), this protein is Aspartate carbamoyltransferase catalytic subunit.